Consider the following 471-residue polypeptide: Ubiquitin carboxyl-terminal hydrolase calypso (471 aa).

One can recognise a UCH catalytic domain in the interval 45-276 (GWLELESDPG…IRFNLMAVVP (232 aa)). The active-site Nucleophile is C131. H213 functions as the Proton donor in the catalytic mechanism. 2 coiled-coil regions span residues 240 to 256 (WEDS…VMAE) and 298 to 324 (GTLQ…DTPT). Residues 307-326 (DEQGESGNGDSQRPDTPTTL) form a disordered region. Positions 314 to 326 (NGDSQRPDTPTTL) are enriched in polar residues. The ULD domain maps to 375 to 403 (NYDKFICTFLSMLAHQGVLGELVSQHLLP). Positions 405 to 471 (KKVSGQGAAN…KGRNKCRKRK (67 aa)) are positively charged C-terminal tail required for binding nucleosomes. The segment at 412 to 471 (AANRISKQSTTASAGGSTAAGTASTPKTQQQQAAAAKNGKSPSKTPGRRRKGRNKCRKRK) is disordered. Residues 420 to 447 (STTASAGGSTAAGTASTPKTQQQQAAAA) are compositionally biased toward low complexity. The segment covering 457–471 (PGRRRKGRNKCRKRK) has biased composition (basic residues).

The protein belongs to the peptidase C12 family. BAP1 subfamily. In terms of assembly, catalytic component of the polycomb repressive deubiquitinase (PR-DUB) complex, at least composed of caly/calypso, Asx and sba (MBD5/6 homolog). The PR-DUB complex associates with nucleosomes to mediate deubiquitination of histone H2AK118ub1 substrates; the association requires the positively charged C-terminal tail of caly, probably due to direct binding of DNA. Interacts (via ULD domain) with Asx (via DEUBAD domain); the interaction produces a stable heterodimer with a composite binding site for ubiquitin. Homodimerizes (via coiled-coil hinge-region between the UCH and ULD domains) to mediate assembly of 2 copies of the caly-Asx heterodimer into a bisymmetric tetramer; dimerization enhances PR-DUB association with nucleosomes.

It is found in the nucleus. The enzyme catalyses Thiol-dependent hydrolysis of ester, thioester, amide, peptide and isopeptide bonds formed by the C-terminal Gly of ubiquitin (a 76-residue protein attached to proteins as an intracellular targeting signal).. Functionally, catalytic component of the polycomb repressive deubiquitinase (PR-DUB) complex, a complex that specifically mediates deubiquitination of histone H2A monoubiquitinated at 'Lys-119' (H2AK118ub1). Mediates bisymmetric organization of the PR-DUB complex and is involved in association with nucleosomes to mediate deubiquitination. Does not deubiquitinate monoubiquitinated histone H2B. Required to maintain the transcriptionally repressive state of homeotic genes throughout development. The PR-DUB complex has weak or no activity toward 'Lys-48'- and 'Lys-63'-linked polyubiquitin chains. Polycomb group (PcG) protein. This chain is Ubiquitin carboxyl-terminal hydrolase calypso, found in Drosophila melanogaster (Fruit fly).